Consider the following 63-residue polypeptide: uncharacterized protein (63 aa).

This is an uncharacterized protein from Rickettsia conorii (strain ATCC VR-613 / Malish 7).